Consider the following 340-residue polypeptide: Entry-fusion complex protein OPG094 (340 aa).

Residues 1-20 (MGGGVSVELPKRDPPPGVPT) form a disordered region. Gly-2 carries N-myristoyl glycine; by host lipidation. Residues 2–319 (GGGVSVELPK…VQHNIKHSFD (318 aa)) are Virion surface-facing. The chain crosses the membrane as a helical; Signal-anchor for type II membrane protein span at residues 320 to 340 (LKLHLISLLSLLVIWILIVAI).

This sequence belongs to the orthopoxvirus OPG086 family. As to quaternary structure, interacts with OPG143. Component of the entry fusion complex (EFC) composed of OPG053, OPG076, OPG086, OPG094, OPG095, OPG099, OPG107, OPG143, OPG104, OPG147 and OPG155. Except for OPG095 and OPG053, each of the EFC proteins is required for assembly or stability of the complex. Post-translationally, unglycosylated because produced in viral factories instead of the classic ER -Golgi route.

It localises to the virion membrane. Component of the entry fusion complex (EFC), which consists of 11 proteins. During cell infection, this complex mediates entry of the virion core into the host cytoplasm by a two-step mechanism consisting of lipid mixing of the viral and cellular membranes and subsequent pore formation. This chain is Entry-fusion complex protein OPG094 (OPG094), found in Vaccinia virus (strain Copenhagen) (VACV).